The primary structure comprises 169 residues: Non-specific lipid transfer protein GPI-anchored 11 (169 aa).

The signal sequence occupies residues 1 to 23 (MAYATILMIFSVVALMSGERAHA). Cystine bridges form between C27-C70, C37-C54, C55-C95, and C68-C105. The GPI-anchor amidated serine moiety is linked to residue S146. Residues 147 to 169 (SDASLLSVSFAFVIFMALISSFY) constitute a propeptide, removed in mature form.

It belongs to the plant LTP family. Expressed in a vascular-specific manner, mainly in roots, and, to a lower extent, in hypocotyls, seedlings stems and flowers.

The protein localises to the cell membrane. Its subcellular location is the secreted. Functionally, probable lipid transfer protein. Proteoglycan-like factor that exhibits xylogen activity consisting in mediating local and inductive cell-cell interactions required for xylem differentiation. This Arabidopsis thaliana (Mouse-ear cress) protein is Non-specific lipid transfer protein GPI-anchored 11.